A 384-amino-acid polypeptide reads, in one-letter code: Deoxyguanosinetriphosphate triphosphohydrolase-like protein (384 aa).

One can recognise an HD domain in the interval 62 to 198 (RLTHSLEVST…AALADDISYI (137 aa)).

Belongs to the dGTPase family. Type 2 subfamily.

The chain is Deoxyguanosinetriphosphate triphosphohydrolase-like protein from Rickettsia rickettsii (strain Iowa).